The chain runs to 327 residues: Thiamine-monophosphate kinase (327 aa).

Residues Asp-30, Ser-45, Ser-46, and Asp-47 each contribute to the Mg(2+) site. His-54 is a binding site for substrate. Asp-76 contributes to the Mg(2+) binding site. Residues Tyr-106, 123 to 124 (GD), and Arg-149 each bind ATP. Asp-124 contacts Mg(2+). Asp-221 provides a ligand contact to Mg(2+). Ser-223 contributes to the ATP binding site. Asp-224 is a Mg(2+) binding site. Substrate is bound by residues Glu-268 and Phe-321.

This sequence belongs to the thiamine-monophosphate kinase family.

It carries out the reaction thiamine phosphate + ATP = thiamine diphosphate + ADP. The protein operates within cofactor biosynthesis; thiamine diphosphate biosynthesis; thiamine diphosphate from thiamine phosphate: step 1/1. Catalyzes the ATP-dependent phosphorylation of thiamine-monophosphate (TMP) to form thiamine-pyrophosphate (TPP), the active form of vitamin B1. The chain is Thiamine-monophosphate kinase from Synechococcus elongatus (strain ATCC 33912 / PCC 7942 / FACHB-805) (Anacystis nidulans R2).